We begin with the raw amino-acid sequence, 64 residues long: Prokaryotic ubiquitin-like protein Pup (64 aa).

The segment at 20–58 (QELTLAASHVVSDVSEVDDLLDEIDGLLAENAEDFVTGF) is ARC ATPase binding. Glutamate 64 participates in a covalent cross-link: Isoglutamyl lysine isopeptide (Glu-Lys) (interchain with K-? in acceptor proteins).

It belongs to the prokaryotic ubiquitin-like protein family. In terms of assembly, strongly interacts with the proteasome-associated ATPase ARC through a hydrophobic interface; the interacting region of Pup lies in its C-terminal half. There is one Pup binding site per ARC hexamer ring.

It participates in protein degradation; proteasomal Pup-dependent pathway. Protein modifier that is covalently attached to lysine residues of substrate proteins, thereby targeting them for proteasomal degradation. The tagging system is termed pupylation. This chain is Prokaryotic ubiquitin-like protein Pup, found in Rothia mucilaginosa (strain DY-18) (Stomatococcus mucilaginosus).